We begin with the raw amino-acid sequence, 150 residues long: Large ribosomal subunit protein bL9 (150 aa).

This sequence belongs to the bacterial ribosomal protein bL9 family.

In terms of biological role, binds to the 23S rRNA. The sequence is that of Large ribosomal subunit protein bL9 from Neisseria gonorrhoeae.